Reading from the N-terminus, the 531-residue chain is Retinoid isomerohydrolase (531 aa).

Residue cysteine 112 is the site of S-palmitoyl cysteine; in membrane form attachment. Fe cation contacts are provided by histidine 180, histidine 241, and histidine 313. Cysteine 329 carries S-palmitoyl cysteine; in membrane form lipidation. Histidine 526 lines the Fe cation pocket.

This sequence belongs to the carotenoid oxygenase family. Requires Fe(2+) as cofactor. Palmitoylated. In terms of tissue distribution, retinal pigment epithelium-specific.

It localises to the cytoplasm. The protein resides in the cell membrane. It carries out the reaction an all-trans-retinyl ester + H2O = 11-cis-retinol + a fatty acid + H(+). It catalyses the reaction lutein = (3R,3'S)-zeaxanthin. The catalysed reaction is all-trans-retinyl hexadecanoate + H2O = 11-cis-retinol + hexadecanoate + H(+). In terms of biological role, plays important roles in the production of 11-cis retinal and in visual pigment regeneration. Capable of catalyzing the isomerization of lutein to meso-zeaxanthin an eye-specific carotenoid. In Danio rerio (Zebrafish), this protein is Retinoid isomerohydrolase (rpe65a).